We begin with the raw amino-acid sequence, 868 residues long: Rifampicin phosphotransferase (868 aa).

The ATP-binding stretch occupies residues 5 to 317 (TERYVLDLQE…FHIVQSRPIT (313 aa)). Residues lysine 26, arginine 120, glycine 135, threonine 139, glutamine 186, glutamate 300, glutamine 312, and arginine 314 each coordinate ATP. Residues 330–755 (NHVYVSVGHQ…TSDGEALTGA (426 aa)) form a rifampicin-binding region. Residues 410 to 430 (FVPSLPDAPPAGPRAGAAPEP) are disordered. The tract at residues 768–866 (GLPVSTGTVE…VHGTDGYIEI (99 aa)) is swivel phosphohistidine. The active-site Tele-phosphohistidine intermediate is the histidine 826.

This sequence belongs to the rifampicin phosphotransferase family.

The catalysed reaction is rifampicin + ATP + H2O = 21-phosphorifampicin + AMP + phosphate + 2 H(+). In terms of biological role, catalyzes the phosphorylation of rifampicin, also known as rifampin (RIF), leading to its inactivation. Confers high level resistance to a variety of clinically used rifamycin antibiotics. Does not show phosphoenolpyruvate (PEP) synthase activity. In Streptomyces sviceus (strain ATCC 29083 / DSM 924 / JCM 4929 / NBRC 13980 / NCIMB 11184 / NRRL 5439 / UC 5370), this protein is Rifampicin phosphotransferase.